The sequence spans 376 residues: Chaperone protein DnaJ (376 aa).

The J domain maps to 5 to 70 (DYYEVLGVGR…DKKAAYDQFG (66 aa)). The CR-type zinc-finger motif lies at 132–210 (GLTKELRIPT…CHGDGRVEKS (79 aa)). Residues Cys145, Cys148, Cys162, Cys165, Cys184, Cys187, Cys198, and Cys201 each coordinate Zn(2+). CXXCXGXG motif repeat units follow at residues 145–152 (CDLCDGSG), 162–169 (CTTCHGQG), 184–191 (CPTCHGRG), and 198–205 (CSKCHGDG).

Belongs to the DnaJ family. In terms of assembly, homodimer. Requires Zn(2+) as cofactor.

Its subcellular location is the cytoplasm. In terms of biological role, participates actively in the response to hyperosmotic and heat shock by preventing the aggregation of stress-denatured proteins and by disaggregating proteins, also in an autonomous, DnaK-independent fashion. Unfolded proteins bind initially to DnaJ; upon interaction with the DnaJ-bound protein, DnaK hydrolyzes its bound ATP, resulting in the formation of a stable complex. GrpE releases ADP from DnaK; ATP binding to DnaK triggers the release of the substrate protein, thus completing the reaction cycle. Several rounds of ATP-dependent interactions between DnaJ, DnaK and GrpE are required for fully efficient folding. Also involved, together with DnaK and GrpE, in the DNA replication of plasmids through activation of initiation proteins. This Shewanella sp. (strain W3-18-1) protein is Chaperone protein DnaJ.